Reading from the N-terminus, the 292-residue chain is 2-dehydro-3-deoxygalactonokinase (292 aa).

The protein belongs to the DgoK family.

It carries out the reaction 2-dehydro-3-deoxy-D-galactonate + ATP = 2-dehydro-3-deoxy-6-phospho-D-galactonate + ADP + H(+). The protein operates within carbohydrate acid metabolism; D-galactonate degradation; D-glyceraldehyde 3-phosphate and pyruvate from D-galactonate: step 2/3. This Escherichia coli (strain K12) protein is 2-dehydro-3-deoxygalactonokinase (dgoK).